An 85-amino-acid chain; its full sequence is Large ribosomal subunit protein bL27 (85 aa).

Belongs to the bacterial ribosomal protein bL27 family.

The chain is Large ribosomal subunit protein bL27 from Variovorax paradoxus (strain S110).